The sequence spans 930 residues: Protein translocase subunit SecA (930 aa).

Residues Q87, 105–109 (GEGKT), and D515 contribute to the ATP site. Residues C914, C916, C925, and H926 each coordinate Zn(2+).

It belongs to the SecA family. Monomer and homodimer. Part of the essential Sec protein translocation apparatus which comprises SecA, SecYEG and auxiliary proteins SecDF-YajC and YidC. The cofactor is Zn(2+).

The protein resides in the cell inner membrane. The protein localises to the cytoplasm. It catalyses the reaction ATP + H2O + cellular proteinSide 1 = ADP + phosphate + cellular proteinSide 2.. Part of the Sec protein translocase complex. Interacts with the SecYEG preprotein conducting channel. Has a central role in coupling the hydrolysis of ATP to the transfer of proteins into and across the cell membrane, serving both as a receptor for the preprotein-SecB complex and as an ATP-driven molecular motor driving the stepwise translocation of polypeptide chains across the membrane. This chain is Protein translocase subunit SecA, found in Burkholderia thailandensis (strain ATCC 700388 / DSM 13276 / CCUG 48851 / CIP 106301 / E264).